Consider the following 167-residue polypeptide: MFPMITGFMNYGQQTVRAARYIGQSFMITLSHVNRLPITIQYPYEKVIAAERFRGRIHFEFDKCIACEVCVRVCPIDLPVVDWKLETDIRKKQLLNYSIDFGICIFCGNCVEYCPTNCLSMTEEYELSTYDRHELNYNQIALGRLPMSVIDDYTIRTILNSPQIKNK.

2 4Fe-4S ferredoxin-type domains span residues 55–84 (GRIH…VDWK) and 95–124 (LNYS…MTEE). The [4Fe-4S] cluster site is built by Cys-64, Cys-67, Cys-70, Cys-74, Cys-104, Cys-107, Cys-110, and Cys-114.

Belongs to the complex I 23 kDa subunit family. NDH is composed of at least 16 different subunits, 5 of which are encoded in the nucleus. Requires [4Fe-4S] cluster as cofactor.

It localises to the plastid. The protein localises to the chloroplast thylakoid membrane. The catalysed reaction is a plastoquinone + NADH + (n+1) H(+)(in) = a plastoquinol + NAD(+) + n H(+)(out). It catalyses the reaction a plastoquinone + NADPH + (n+1) H(+)(in) = a plastoquinol + NADP(+) + n H(+)(out). NDH shuttles electrons from NAD(P)H:plastoquinone, via FMN and iron-sulfur (Fe-S) centers, to quinones in the photosynthetic chain and possibly in a chloroplast respiratory chain. The immediate electron acceptor for the enzyme in this species is believed to be plastoquinone. Couples the redox reaction to proton translocation, and thus conserves the redox energy in a proton gradient. This Morus indica (Mulberry) protein is NAD(P)H-quinone oxidoreductase subunit I, chloroplastic.